An 859-amino-acid polypeptide reads, in one-letter code: Homeobox-leucine zipper protein HOX32 (859 aa).

The segment at 7–31 (AAVHGVGRQDRSSPGGGGAPQVDTG) is disordered. Residues 29 to 92 (DTGKYVRYTP…NRRCREKQRK (64 aa)) constitute a DNA-binding region (homeobox). Residues 100–129 (VNRKLTAMNKLLMEENDRLQKQVSRLVYEN) are a coiled coil. Polar residues predominate over residues 146–164 (TSCESVVTSGQHHQQQNPA). The interval 146–172 (TSCESVVTSGQHHQQQNPAATRPQRDA) is disordered. The START domain maps to 171–393 (DANNPAGLLA…LRHIRQIAHE (223 aa)).

This sequence belongs to the HD-ZIP homeobox family. Class III subfamily. As to expression, expressed in seedlings, roots, stems, leaf sheaths and blades and panicles.

It is found in the nucleus. Its function is as follows. Probable transcription factor. The sequence is that of Homeobox-leucine zipper protein HOX32 (HOX32) from Oryza sativa subsp. indica (Rice).